The chain runs to 1017 residues: MPWDVKFSHGLYLPQLGWWLDAHFPQKRSFVSHAHSDHTATHDEILCSAGTAALMRARLDAKRIEHVLPFGQTEQLTADCGVTLHPAGHIFGSAQCLLEHGEHGSLLYTGDFKLRRGRSAEPCATPHAELVIMETTFGRPHYVFPPTAQVLNDIATFCHETIADDGVPVLFGYSLGKSQELLCSLEESQLPVMLHPQTHKLTRVYEQFGIAFPPYREFDLATVRGHVVICPPQSRESAFVRRIPGHRTAMITGWAMDPGAIYRYQCDAAFPLSDHADYQDLLRFVEAVNPQRVLTLHGFATEFAQTLRERGLEAWAIGEDNQLELGIRSSPPQVRAGDATPSSRSSGDAGVAAPACATPLHAPDSFARFVAAADAVKATPKKLEKIAVLRDYLAALTPPDMGTAATFLTGRAFPQRDPRNLTLGWSVIKRAVLEVAGVTEADYRDAYHRFADTGDAAGAVLAQRSLRPGDATPSSRPEILGVAGVADPGPAASRPAATSAPTTCSLADMALFFERAAAARGPAAKLDLLRERLALITPDEARYLIKIITGDLRIGLKEGLVEEALAAAAGQPLEAVREAAMLCGDIAAVARAARTDTLAEIQLTVFNPLQFMLASPEPTAEAIVDRFAAQRTAEAAAIVAGVGDPGPGSSSPATADAAPALARIWLEEKYDGIRCQLHKSGGRVELYSRDLNVITEQFPDLARAALALPHDFIGDGELLAWRDGRALPFAELQKRLGRKGGDDFFLGAEIPVSISFYDLLWLDGRSLLKEPLRERRALLERLLHGDATPSSRPDGDEGVAAPALQPATLNPQLSTKFSLAPVTFAHTASDIEAAFLAARQRGNEGLMAKDPASGYTPGRRGLAWLKLKKAYATLDVVVVGVEYGHGKRRDVLSDYTFAIRDEEHDNQLLTVGKAYSGLTDVEIAQLTQHFLEHTLEVHGRYRVVVPDTVIEVAFDTIQPSSRHQSGFALRFPRIARIRTDKTPAEIDTLATCRKLAAAAGSGGIAAVGARPPPAASD.

A unknown region spans residues 1-363 (MPWDVKFSHG…PACATPLHAP (363 aa)). The interval 326–352 (GIRSSPPQVRAGDATPSSRSSGDAGVA) is disordered. The DNA ligase stretch occupies residues 364–1017 (DSFARFVAAA…GARPPPAASD (654 aa)). Residue glutamate 667 participates in ATP binding. Lysine 669 functions as the N6-AMP-lysine intermediate in the catalytic mechanism. ATP-binding residues include arginine 674, arginine 689, glutamate 717, arginine 860, and lysine 866.

This sequence in the C-terminal section; belongs to the ATP-dependent DNA ligase family. Requires Mg(2+) as cofactor.

The catalysed reaction is ATP + (deoxyribonucleotide)n-3'-hydroxyl + 5'-phospho-(deoxyribonucleotide)m = (deoxyribonucleotide)n+m + AMP + diphosphate.. DNA ligase that seals nicks in double-stranded DNA during DNA replication, DNA recombination and DNA repair. The sequence is that of Probable DNA ligase (lig) from Opitutus terrae (strain DSM 11246 / JCM 15787 / PB90-1).